A 274-amino-acid chain; its full sequence is Acetyl-coenzyme A carboxylase carboxyl transferase subunit beta (274 aa).

Positions 16 to 274 constitute a CoA carboxyltransferase N-terminal domain; that stretch reads LWTKCEECKN…LLNLLFYKNA (259 aa). Residues Cys-20, Cys-23, Cys-39, and Cys-42 each contribute to the Zn(2+) site. A C4-type zinc finger spans residues 20 to 42; that stretch reads CEECKNILLAQELETNFYVCPKC.

This sequence belongs to the AccD/PCCB family. Acetyl-CoA carboxylase is a heterohexamer composed of biotin carboxyl carrier protein (AccB), biotin carboxylase (AccC) and two subunits each of ACCase subunit alpha (AccA) and ACCase subunit beta (AccD). Zn(2+) serves as cofactor.

Its subcellular location is the cytoplasm. It catalyses the reaction N(6)-carboxybiotinyl-L-lysyl-[protein] + acetyl-CoA = N(6)-biotinyl-L-lysyl-[protein] + malonyl-CoA. Its pathway is lipid metabolism; malonyl-CoA biosynthesis; malonyl-CoA from acetyl-CoA: step 1/1. Its function is as follows. Component of the acetyl coenzyme A carboxylase (ACC) complex. Biotin carboxylase (BC) catalyzes the carboxylation of biotin on its carrier protein (BCCP) and then the CO(2) group is transferred by the transcarboxylase to acetyl-CoA to form malonyl-CoA. The protein is Acetyl-coenzyme A carboxylase carboxyl transferase subunit beta of Hydrogenobaculum sp. (strain Y04AAS1).